Here is a 318-residue protein sequence, read N- to C-terminus: Death effector domain-containing protein (318 aa).

The 79-residue stretch at 25–103 (SLHRMFDIVG…RHDLLPYVTL (79 aa)) folds into the DED domain. Disordered regions lie at residues 128-147 (PRAL…TVPP) and 160-191 (QMCS…KEKQ).

In terms of assembly, interacts with CASP8, CASP10, KRT8, KRT18, CASP3 and FADD. Homodimerizes and heterodimerizes with DEDD2. Exists predominantly in a mono- or diubiquitinated form. As to expression, widely expressed with highest levels in testis.

The protein resides in the cytoplasm. Its subcellular location is the nucleus. It localises to the nucleolus. A scaffold protein that directs CASP3 to certain substrates and facilitates their ordered degradation during apoptosis. May also play a role in mediating CASP3 cleavage of KRT18. Regulates degradation of intermediate filaments during apoptosis. May play a role in the general transcription machinery in the nucleus and might be an important regulator of the activity of GTF3C3. Inhibits DNA transcription in vitro. The chain is Death effector domain-containing protein (DEDD) from Homo sapiens (Human).